We begin with the raw amino-acid sequence, 223 residues long: Phosphoribosylformylglycinamidine synthase subunit PurQ (223 aa).

One can recognise a Glutamine amidotransferase type-1 domain in the interval 3–223 (FAVLVFPGSN…MVKSWREQHV (221 aa)). Cys85 functions as the Nucleophile in the catalytic mechanism. Catalysis depends on residues His193 and Glu195.

Part of the FGAM synthase complex composed of 1 PurL, 1 PurQ and 2 PurS subunits.

It localises to the cytoplasm. The catalysed reaction is N(2)-formyl-N(1)-(5-phospho-beta-D-ribosyl)glycinamide + L-glutamine + ATP + H2O = 2-formamido-N(1)-(5-O-phospho-beta-D-ribosyl)acetamidine + L-glutamate + ADP + phosphate + H(+). The enzyme catalyses L-glutamine + H2O = L-glutamate + NH4(+). Its pathway is purine metabolism; IMP biosynthesis via de novo pathway; 5-amino-1-(5-phospho-D-ribosyl)imidazole from N(2)-formyl-N(1)-(5-phospho-D-ribosyl)glycinamide: step 1/2. In terms of biological role, part of the phosphoribosylformylglycinamidine synthase complex involved in the purines biosynthetic pathway. Catalyzes the ATP-dependent conversion of formylglycinamide ribonucleotide (FGAR) and glutamine to yield formylglycinamidine ribonucleotide (FGAM) and glutamate. The FGAM synthase complex is composed of three subunits. PurQ produces an ammonia molecule by converting glutamine to glutamate. PurL transfers the ammonia molecule to FGAR to form FGAM in an ATP-dependent manner. PurS interacts with PurQ and PurL and is thought to assist in the transfer of the ammonia molecule from PurQ to PurL. The protein is Phosphoribosylformylglycinamidine synthase subunit PurQ of Staphylococcus aureus (strain Mu50 / ATCC 700699).